Here is a 72-residue protein sequence, read N- to C-terminus: Large ribosomal subunit protein bL31 (72 aa).

Zn(2+) is bound by residues Cys-17, Cys-19, Cys-37, and Cys-40.

The protein belongs to the bacterial ribosomal protein bL31 family. Type A subfamily. Part of the 50S ribosomal subunit. Requires Zn(2+) as cofactor.

In terms of biological role, binds the 23S rRNA. The polypeptide is Large ribosomal subunit protein bL31 (Clostridium botulinum (strain Loch Maree / Type A3)).